A 436-amino-acid chain; its full sequence is Trigger factor (436 aa).

The 86-residue stretch at 163-248 (GDQVIIDFVG…VHSVQTKVLP (86 aa)) folds into the PPIase FKBP-type domain.

This sequence belongs to the FKBP-type PPIase family. Tig subfamily.

It is found in the cytoplasm. It catalyses the reaction [protein]-peptidylproline (omega=180) = [protein]-peptidylproline (omega=0). Its function is as follows. Involved in protein export. Acts as a chaperone by maintaining the newly synthesized protein in an open conformation. Functions as a peptidyl-prolyl cis-trans isomerase. The chain is Trigger factor from Hydrogenovibrio crunogenus (strain DSM 25203 / XCL-2) (Thiomicrospira crunogena).